The following is a 210-amino-acid chain: Imidazoleglycerol-phosphate dehydratase (210 aa).

The segment at 185 to 210 is disordered; the sequence is PRRGGSIPSSKGVLEQAGDNNTEKSK.

Belongs to the imidazoleglycerol-phosphate dehydratase family.

The protein localises to the cytoplasm. It catalyses the reaction D-erythro-1-(imidazol-4-yl)glycerol 3-phosphate = 3-(imidazol-4-yl)-2-oxopropyl phosphate + H2O. It functions in the pathway amino-acid biosynthesis; L-histidine biosynthesis; L-histidine from 5-phospho-alpha-D-ribose 1-diphosphate: step 6/9. In Prochlorococcus marinus (strain SARG / CCMP1375 / SS120), this protein is Imidazoleglycerol-phosphate dehydratase.